We begin with the raw amino-acid sequence, 567 residues long: uncharacterized protein (567 aa).

6 helical membrane-spanning segments follow: residues 20-40, 69-89, 95-115, 126-146, 168-188, and 528-548; these read FTIL…SGVL, SLET…SVFI, AYLT…VALI, ILLN…FMCL, IPLV…YLLF, and IFGS…LLAI.

Its subcellular location is the cell membrane. This is an uncharacterized protein from Escherichia coli (strain K12).